The following is a 101-amino-acid chain: NAD(P)H-quinone oxidoreductase subunit 4L, chloroplastic (101 aa).

3 consecutive transmembrane segments (helical) span residues 2–22 (MLEH…YGLI), 27–46 (MVRA…MNLI), and 61–81 (IFSI…PAIV).

This sequence belongs to the complex I subunit 4L family. NDH is composed of at least 16 different subunits, 5 of which are encoded in the nucleus.

It localises to the plastid. The protein localises to the chloroplast thylakoid membrane. The enzyme catalyses a plastoquinone + NADH + (n+1) H(+)(in) = a plastoquinol + NAD(+) + n H(+)(out). It catalyses the reaction a plastoquinone + NADPH + (n+1) H(+)(in) = a plastoquinol + NADP(+) + n H(+)(out). Functionally, NDH shuttles electrons from NAD(P)H:plastoquinone, via FMN and iron-sulfur (Fe-S) centers, to quinones in the photosynthetic chain and possibly in a chloroplast respiratory chain. The immediate electron acceptor for the enzyme in this species is believed to be plastoquinone. Couples the redox reaction to proton translocation, and thus conserves the redox energy in a proton gradient. The protein is NAD(P)H-quinone oxidoreductase subunit 4L, chloroplastic of Drimys granadensis.